A 620-amino-acid polypeptide reads, in one-letter code: Estrogen receptor (620 aa).

Composition is skewed to polar residues over residues 1–10 (MSKRQSSVQI) and 101–111 (GSLQSLGSGPT). 2 disordered regions span residues 1–55 (MSKR…RGSG) and 88–111 (YSAP…SGPT). The tract at residues 1–185 (MSKRQSSVQI…GFEMAKDTRF (185 aa)) is modulating. 2 NR C4-type zinc fingers span residues 186-206 (CAVC…CEGC) and 222-246 (CPAT…LRKC). The segment at residues 186 to 251 (CAVCSDYASG…RLRKCYEVGM (66 aa)) is a DNA-binding region (nuclear receptor). Residues 252–314 (MKGGVRKDRI…GGGRLSVTSI (63 aa)) are hinge. The segment at 286-308 (KTVHYDGRKRSSTGGGGGGGGGR) is disordered. Residues 298 to 308 (TGGGGGGGGGR) show a composition bias toward gly residues. The region spanning 315–551 (PPEQVLLLLQ…DLLLEMLDAH (237 aa)) is the NR LBD domain. Positions 558 to 620 (RAPQSLSQVD…RPDCTPALQD (63 aa)) are disordered.

It belongs to the nuclear hormone receptor family. NR3 subfamily. Binds DNA as a homodimer. Can form a heterodimer with ER-beta. Widely expressed in brain, ovary, testis, and female liver.

The protein resides in the nucleus. Functionally, the steroid hormones and their receptors are involved in the regulation of eukaryotic gene expression and affect cellular proliferation and differentiation in target tissues. The protein is Estrogen receptor (esr1) of Oryzias latipes (Japanese rice fish).